The following is a 359-amino-acid chain: Spore germination protein GerQC (359 aa).

Positions 1–16 (MKRWILFLILSVFLIG) are cleaved as a signal peptide. The N-palmitoyl cysteine moiety is linked to residue C17. A lipid anchor (S-diacylglycerol cysteine) is attached at C17.

It belongs to the GerABKC lipoprotein family.

The protein resides in the membrane. In terms of biological role, required for the germination response to inosine. Has no role in L-alanine germination. The sequence is that of Spore germination protein GerQC (gerQC) from Bacillus cereus.